We begin with the raw amino-acid sequence, 462 residues long: Transcription initiation factor TFIID subunit 7-like (462 aa).

Disordered regions lie at residues 1–97 (MECP…VPDE) and 327–366 (DSRS…SEEY). Composition is skewed to low complexity over residues 16 to 30 (STPT…SQQE) and 66 to 77 (DADSSAQAAAQA). The span at 333–365 (DDDEDEDDEDEDEDEDEDEDEDKEEEEEDCSEE) shows a compositional bias: acidic residues. The stretch at 342–462 (DEDEDEDEDE…QEQLQRFLKK (121 aa)) forms a coiled coil.

The protein belongs to the TAF7 family. TFIID is composed of TATA binding protein (TBP) and a number of TBP-associated factors (TAFs). TAF7L may replace TAF7 in a spermatogenesis-specific form of TFIID. Interacts with TBP; the interaction occurs in a sub-population of cells (pachytene and haploid round spermatids) and is developmentally regulated through differential intracellular localization of the two proteins. Interacts with TAF1. As to expression, testis-specific.

Its subcellular location is the nucleus. The protein resides in the cytoplasm. In terms of biological role, probably functions as a spermatogenesis-specific component of the DNA-binding general transcription factor complex TFIID, a multimeric protein complex that plays a central role in mediating promoter responses to various activators and repressors. May play a role in spermatogenesis. This chain is Transcription initiation factor TFIID subunit 7-like (TAF7L), found in Homo sapiens (Human).